A 271-amino-acid polypeptide reads, in one-letter code: Bifunctional protein FolD (271 aa).

NADP(+) is bound by residues 154–156, T181, and I222; that span reads GRS.

The protein belongs to the tetrahydrofolate dehydrogenase/cyclohydrolase family. As to quaternary structure, homodimer.

It catalyses the reaction (6R)-5,10-methylene-5,6,7,8-tetrahydrofolate + NADP(+) = (6R)-5,10-methenyltetrahydrofolate + NADPH. It carries out the reaction (6R)-5,10-methenyltetrahydrofolate + H2O = (6R)-10-formyltetrahydrofolate + H(+). Its pathway is one-carbon metabolism; tetrahydrofolate interconversion. Catalyzes the oxidation of 5,10-methylenetetrahydrofolate to 5,10-methenyltetrahydrofolate and then the hydrolysis of 5,10-methenyltetrahydrofolate to 10-formyltetrahydrofolate. In Thermosipho africanus (strain TCF52B), this protein is Bifunctional protein FolD.